The following is a 153-amino-acid chain: Nucleoside diphosphate kinase (153 aa).

ATP-binding residues include Lys-13, Phe-61, Arg-89, Thr-95, Arg-106, and Asn-116. The active-site Pros-phosphohistidine intermediate is His-119.

This sequence belongs to the NDK family. The cofactor is Mg(2+).

The protein localises to the cytoplasm. The protein resides in the cell membrane. The catalysed reaction is a 2'-deoxyribonucleoside 5'-diphosphate + ATP = a 2'-deoxyribonucleoside 5'-triphosphate + ADP. The enzyme catalyses a ribonucleoside 5'-diphosphate + ATP = a ribonucleoside 5'-triphosphate + ADP. Major role in the synthesis of nucleoside triphosphates other than ATP. The ATP gamma phosphate is transferred to the NDP beta phosphate via a ping-pong mechanism, using a phosphorylated active-site intermediate. The protein is Nucleoside diphosphate kinase of Gallus gallus (Chicken).